We begin with the raw amino-acid sequence, 177 residues long: Large ribosomal subunit protein uL6 (177 aa).

Belongs to the universal ribosomal protein uL6 family. As to quaternary structure, part of the 50S ribosomal subunit.

In terms of biological role, this protein binds to the 23S rRNA, and is important in its secondary structure. It is located near the subunit interface in the base of the L7/L12 stalk, and near the tRNA binding site of the peptidyltransferase center. The chain is Large ribosomal subunit protein uL6 from Sodalis glossinidius (strain morsitans).